We begin with the raw amino-acid sequence, 860 residues long: Leucine--tRNA ligase (860 aa).

The 'HIGH' region signature appears at 42–52 (PYPSGRLHMGH). The 'KMSKS' region signature appears at 619–623 (KMSKS). Residue K622 coordinates ATP.

The protein belongs to the class-I aminoacyl-tRNA synthetase family.

Its subcellular location is the cytoplasm. The catalysed reaction is tRNA(Leu) + L-leucine + ATP = L-leucyl-tRNA(Leu) + AMP + diphosphate. This Shigella dysenteriae serotype 1 (strain Sd197) protein is Leucine--tRNA ligase.